We begin with the raw amino-acid sequence, 336 residues long: MLPDLTTLSDFRNALAQAPGADADARAACEDRNGQLTKPPGALGQLEEIAIWYGSWRGTARPEVRAPQVIVFAGNHGVTARGVSAFPAEVTVQMVANFKAGGAAINQLAQLADARMDVHALELDRPTADFTQGPAMSEEDLLAALRTGWNAVDPASDVLVVGEMGIGNTTSAAAICHALYGGEPGDWTGRGTGVDDEGLALKTAVIAEAVALHGSRDGLEVLRCLGGREIAAMAGAIAAARVLRIPVILDGFICCAAAASLARLHDQALDHAVAGHQSAEGGHQALLARLGKAPLLSLGLRLGEGSGAALAIQVLKGALACHSGMATFAEAGVSDG.

Glu304 serves as the catalytic Proton acceptor.

Belongs to the CobT family.

The catalysed reaction is 5,6-dimethylbenzimidazole + nicotinate beta-D-ribonucleotide = alpha-ribazole 5'-phosphate + nicotinate + H(+). Its pathway is nucleoside biosynthesis; alpha-ribazole biosynthesis; alpha-ribazole from 5,6-dimethylbenzimidazole: step 1/2. Functionally, catalyzes the synthesis of alpha-ribazole-5'-phosphate from nicotinate mononucleotide (NAMN) and 5,6-dimethylbenzimidazole (DMB). The sequence is that of Nicotinate-nucleotide--dimethylbenzimidazole phosphoribosyltransferase from Ruegeria sp. (strain TM1040) (Silicibacter sp.).